Reading from the N-terminus, the 269-residue chain is Type II iodothyronine deiodinase (269 aa).

Residues 1–9 (MGILSVDLL) are Lumenal-facing. A helical; Signal-anchor for type III membrane protein transmembrane segment spans residues 10–34 (ITLQILPVFFSNCLFLALYDSVILL). The Cytoplasmic portion of the chain corresponds to 35 to 269 (KHVVLLLSRS…KNFSKRUKLD (235 aa)). Residues 83 to 103 (NSSVVHVSSPEGGDTSGNGAQ) form a disordered region. Sec133 is an active-site residue. Residues Sec133 and Sec266 are each a non-standard amino acid (selenocysteine).

The protein belongs to the iodothyronine deiodinase family. In terms of assembly, predominantly monomer. Can form homodimers but homodimerization is not essential for enzyme activity. Interacts with USP20 and USP33. Interacts with MARCHF6. Ubiquitinated by MARCHF6, leading to its degradation by the proteasome. Deubiquitinated by USP20 and USP33. In terms of tissue distribution, highly expressed in thyroid, mammary and pituitary glands, then in hypothalamus. Low levels detected in diaphragm, heart, kidney and lung.

Its subcellular location is the endoplasmic reticulum membrane. It carries out the reaction 3,3',5-triiodo-L-thyronine + iodide + A + H(+) = L-thyroxine + AH2. The enzyme catalyses 3,3'-diiodo-L-thyronine + iodide + A + H(+) = 3,3',5'-triiodo-L-thyronine + AH2. It catalyses the reaction 3'-iodo-L-thyronine + iodide + A + H(+) = 3',5'-diiodo-L-thyronine + AH2. The catalysed reaction is 3,3'-diiodothyronamine + iodide + A + H(+) = 3,3',5'-triiodothyronamine + AH2. It carries out the reaction 3'-iodothyronamine + iodide + A + H(+) = 3',5'-diiodothyronamine + AH2. Plays a crucial role in the metabolism of thyroid hormones (TH) and has specific roles in TH activation and inactivation by deiodination. Catalyzes the deiodination of L-thyroxine (T4) to 3,5,3'-triiodothyronine (T3), 3,3',5'-triiodothyronine (rT3) to 3,3'-diiodothyronine (3,3'-T2) and 3',5'-diiodothyronine (3',5'-T2) to 3'-monoiodothyronine (3'-T1) via outer-ring deiodination (ORD). Catalyzes the phenolic ring deiodinations of 3,3',5'-triiodothyronamine and 3',5'- diiodothyronamine. The polypeptide is Type II iodothyronine deiodinase (DIO2) (Bos taurus (Bovine)).